A 347-amino-acid chain; its full sequence is 4-hydroxy-2-oxovalerate aldolase 1 (347 aa).

In terms of domain architecture, Pyruvate carboxyltransferase spans 8–261; it reads VTLYDMSLLX…ETGIDLYKIM (254 aa). His-20 acts as the Proton acceptor in catalysis. Substrate contacts are provided by Ser-171 and His-200. Mn(2+)-binding residues include His-200 and His-202. Tyr-291 is a binding site for substrate.

Belongs to the 4-hydroxy-2-oxovalerate aldolase family.

It catalyses the reaction (S)-4-hydroxy-2-oxopentanoate = acetaldehyde + pyruvate. The polypeptide is 4-hydroxy-2-oxovalerate aldolase 1 (salH) (Metapseudomonas furukawaii (Pseudomonas furukawaii)).